A 235-amino-acid chain; its full sequence is Peptidyl-tRNA hydrolase (235 aa).

Tyr14 is a tRNA binding site. Catalysis depends on His19, which acts as the Proton acceptor. TRNA contacts are provided by Phe64, Asn66, and Asn112. The segment at 186–235 (RTAPPRSSGGSPKTDKPAKATREPPPAAKPEATPEEETRSPLQRLVDKFR) is disordered. Positions 198–207 (KTDKPAKATR) are enriched in basic and acidic residues.

Belongs to the PTH family. As to quaternary structure, monomer.

Its subcellular location is the cytoplasm. The enzyme catalyses an N-acyl-L-alpha-aminoacyl-tRNA + H2O = an N-acyl-L-amino acid + a tRNA + H(+). Hydrolyzes ribosome-free peptidyl-tRNAs (with 1 or more amino acids incorporated), which drop off the ribosome during protein synthesis, or as a result of ribosome stalling. Its function is as follows. Catalyzes the release of premature peptidyl moieties from peptidyl-tRNA molecules trapped in stalled 50S ribosomal subunits, and thus maintains levels of free tRNAs and 50S ribosomes. The polypeptide is Peptidyl-tRNA hydrolase (Dinoroseobacter shibae (strain DSM 16493 / NCIMB 14021 / DFL 12)).